We begin with the raw amino-acid sequence, 883 residues long: Coatomer subunit gamma (883 aa).

The disordered stretch occupies residues M1–Q25. HEAT repeat units lie at residues R69–D106, R292–A329, V331–S364, S365–R401, T404–D439, and A476–A513.

It belongs to the COPG family. As to quaternary structure, oligomeric complex that consists of at least the alpha, beta, beta', gamma, delta, epsilon and zeta subunits. In terms of tissue distribution, expressed in ovary, testis, testis tip, young spermatocytes, germ cells and follicle cells. Up-regulated expression within centrally to posteriorly located germarial cysts and in migrating follicle cells. Widespread expression in imaginal disks including eye-antennal disk, wing disk, third leg and haltere disk.

It localises to the cytoplasm. It is found in the golgi apparatus membrane. The protein resides in the cytoplasmic vesicle. The protein localises to the COPI-coated vesicle membrane. Its subcellular location is the endoplasmic reticulum. The coatomer is a cytosolic protein complex that binds to dilysine motifs and reversibly associates with Golgi non-clathrin-coated vesicles, which further mediate biosynthetic protein transport from the ER, via the Golgi up to the trans Golgi network. Coatomer complex is required for budding from Golgi membranes, and is essential for the retrograde Golgi-to-ER transport of dilysine-tagged proteins. Required for limiting lipid storage in lipid droplets. Involved in the expansion of luminal extracellular matrices and apical membrane during tubulogenesis. Required in the tracheal epithelium for luminal protein secretion and diametric tube growth. In salivary glands, required for deposition of O-glycans and luminal extracellular matrix assembly. Required for epidermal morphogenesis and cuticle development. This is Coatomer subunit gamma from Drosophila melanogaster (Fruit fly).